The sequence spans 579 residues: Proteasome-associated ATPase (579 aa).

Positions 1–21 (MPRDETPEREHAEQQSRQALE) are disordered. Residues 8 to 86 (EREHAEQQSR…REEVEKLTQP (79 aa)) adopt a coiled-coil conformation. Position 268 to 273 (268 to 273 (GCGKTL)) interacts with ATP. The segment at 578 to 579 (YL) is docks into pockets in the proteasome alpha-ring.

It belongs to the AAA ATPase family. As to quaternary structure, homohexamer. Assembles into a hexameric ring structure that caps the 20S proteasome core. Strongly interacts with the prokaryotic ubiquitin-like protein Pup through a hydrophobic interface; the interacting region of ARC lies in its N-terminal coiled-coil domain. There is one Pup binding site per ARC hexamer ring. Upon ATP-binding, the C-terminus of ARC interacts with the alpha-rings of the proteasome core, possibly by binding to the intersubunit pockets.

Its pathway is protein degradation; proteasomal Pup-dependent pathway. In terms of biological role, ATPase which is responsible for recognizing, binding, unfolding and translocation of pupylated proteins into the bacterial 20S proteasome core particle. May be essential for opening the gate of the 20S proteasome via an interaction with its C-terminus, thereby allowing substrate entry and access to the site of proteolysis. Thus, the C-termini of the proteasomal ATPase may function like a 'key in a lock' to induce gate opening and therefore regulate proteolysis. This is Proteasome-associated ATPase from Acidimicrobium ferrooxidans (strain DSM 10331 / JCM 15462 / NBRC 103882 / ICP).